We begin with the raw amino-acid sequence, 513 residues long: Abl interactor 2 (513 aa).

Serine 40 is modified (phosphoserine). The 63-residue stretch at 45 to 107 (RALEETKAYT…DIHKEKVARR (63 aa)) folds into the t-SNARE coiled-coil homology domain. The segment at 167–431 (KMGGLPRTTP…PPEDYEEEEA (265 aa)) is disordered. The segment covering 174-185 (TTPPTQKPPSPP) has biased composition (pro residues). Residues serine 183 and serine 227 each carry the phosphoserine modification. Residues 217–241 (PTRNMAPSQQSPVRTASVNQRNRTY) are compositionally biased toward polar residues. Residues 242–272 (SSSGSSGGSHPSSRSSSRENSGSGSVGVPIA) are compositionally biased toward low complexity. Residues 273-282 (VPTPSPPSVF) are compositionally biased toward pro residues. Residues 283–325 (PAPAGSAGTPPLPATSASAPAPLVPATVPSSTAPNAAAGGAPN) are compositionally biased toward low complexity. At threonine 361 the chain carries Phosphothreonine. Phosphoserine is present on serine 368. The span at 376–399 (SITSQTSLQNQMNGGPFYSQNPVS) shows a compositional bias: polar residues. Residues 400 to 409 (DTPPPPPPVE) are compositionally biased toward pro residues. An SH3 domain is found at 451–510 (SYLEKVVAIYDYTKDKEDELSFQEGAIIYVIKKNDDGWYEGVMNGVTGLFPGNYVESIMH).

The protein belongs to the ABI family. Component of the WAVE complex composed of ABI2, CYFIP1 or CYFIP2, BRK1, NCKAP1 and WASF1/WAVE1. Within the complex, a heterodimer containing NCKAP1 and CYFIP1 interacts with a heterotrimer formed by WAVE1, ABI2 and BRK1. CYFIP2 binds to activated RAC1 which causes the complex to dissociate, releasing activated WASF1. Interacts (via SH3 domain) with ABL1 and ABL2. As to quaternary structure, (Microbial infection) Interacts with human cytomegalovirus UL135. In terms of processing, phosphorylated by ABL1. As to expression, widely expressed. Abundant in testes, ovary, thymus, and colon, with lower but detectable levels in prostate, peripheral blood leukocytes, and spleen.

The protein localises to the cytoplasm. It localises to the nucleus. It is found in the cell projection. The protein resides in the lamellipodium. Its subcellular location is the filopodium. The protein localises to the cytoskeleton. It localises to the cell junction. It is found in the adherens junction. In terms of biological role, regulator of actin cytoskeleton dynamics underlying cell motility and adhesion. Functions as a component of the WAVE complex, which activates actin nucleating machinery Arp2/3 to drive lamellipodia formation. Acts as a regulator and substrate of nonreceptor tyrosine kinases ABL1 and ABL2 involved in processes linked to cell growth and differentiation. Positively regulates ABL1-mediated phosphorylation of ENAH, which is required for proper polymerization of nucleated actin filaments at the leading edge. Contributes to the regulation of actin assembly at the tips of neuron projections. In particular, controls dendritic spine morphogenesis and may promote dendritic spine specification toward large mushroom-type spines known as repositories of memory in the brain. In hippocampal neurons, may mediate actin-dependent BDNF-NTRK2 early endocytic trafficking that triggers dendrite outgrowth. Participates in ocular lens morphogenesis, likely by regulating lamellipodia-driven adherens junction formation at the epithelial cell-secondary lens fiber interface. Also required for nascent adherens junction assembly in epithelial cells. This Homo sapiens (Human) protein is Abl interactor 2.